Reading from the N-terminus, the 299-residue chain is ATP phosphoribosyltransferase (299 aa).

Belongs to the ATP phosphoribosyltransferase family. Long subfamily. It depends on Mg(2+) as a cofactor.

Its subcellular location is the cytoplasm. The catalysed reaction is 1-(5-phospho-beta-D-ribosyl)-ATP + diphosphate = 5-phospho-alpha-D-ribose 1-diphosphate + ATP. Its pathway is amino-acid biosynthesis; L-histidine biosynthesis; L-histidine from 5-phospho-alpha-D-ribose 1-diphosphate: step 1/9. Feedback inhibited by histidine. Its function is as follows. Catalyzes the condensation of ATP and 5-phosphoribose 1-diphosphate to form N'-(5'-phosphoribosyl)-ATP (PR-ATP). Has a crucial role in the pathway because the rate of histidine biosynthesis seems to be controlled primarily by regulation of HisG enzymatic activity. This Pasteurella multocida (strain Pm70) protein is ATP phosphoribosyltransferase (hisG).